Here is a 63-residue protein sequence, read N- to C-terminus: UPF0337 protein PSPTO_1596 (63 aa).

The tract at residues 20–63 is disordered; that stretch reads KQAVGKATDNTKLQAEGKAQELKGEGQQAKGEVKDAVKKGVDKV. Positions 50 to 63 are enriched in basic and acidic residues; it reads GEVKDAVKKGVDKV.

It belongs to the UPF0337 (CsbD) family.

The sequence is that of UPF0337 protein PSPTO_1596 from Pseudomonas syringae pv. tomato (strain ATCC BAA-871 / DC3000).